Consider the following 303-residue polypeptide: Nucleotide-binding protein Dvul_1502 (303 aa).

Position 23-30 (23-30 (GLSGAGKS)) interacts with ATP. A GTP-binding site is contributed by 75–78 (DLRE).

It belongs to the RapZ-like family.

Its function is as follows. Displays ATPase and GTPase activities. In Nitratidesulfovibrio vulgaris (strain DP4) (Desulfovibrio vulgaris), this protein is Nucleotide-binding protein Dvul_1502.